The following is a 367-amino-acid chain: Germination protease (367 aa).

The propeptide occupies 1–15 (MKEPLDLSKYSVRTD).

Belongs to the peptidase A25 family. In terms of assembly, homotetramer. In terms of processing, autoproteolytically processed. The inactive tetrameric zymogen termed p46 autoprocesses to a smaller form termed p41, which is active only during spore germination.

It catalyses the reaction Endopeptidase action with P4 Glu or Asp, P1 preferably Glu &gt; Asp, P1' hydrophobic and P2' Ala.. Functionally, initiates the rapid degradation of small, acid-soluble proteins during spore germination. The sequence is that of Germination protease from Bacillus cereus (strain G9842).